The sequence spans 167 residues: LIM domain transcription factor LMO4.1 (167 aa).

Over residues Met-1–Asn-17 the composition is skewed to polar residues. The disordered stretch occupies residues Met-1 to Pro-20. LIM zinc-binding domains follow at residues Lys-22–Ser-84 and Gly-86–Ser-148.

Functionally, acts as a positive cofactor of GATA transcription factors to establish the identity of the ventral mesoderm during gastrulation. Down-regulation in the dorsal mesoderm is necessary for the proper formation of this territory since, when present, lmo4 may bind ldb1 and restrict the availability of this cofactor for Spemman organizer transcription factors. At neurula stages, suppresses primary neuron differentiation and modulates gene expression at the Isthmic Organizer of the midbrain-hindbrain boundary. The sequence is that of LIM domain transcription factor LMO4.1 (lmo4.1) from Xenopus tropicalis (Western clawed frog).